The following is a 125-amino-acid chain: Phosphoribosyl-AMP cyclohydrolase (125 aa).

Asp-74 is a binding site for Mg(2+). Cys-75 contributes to the Zn(2+) binding site. Residues Asp-76 and Asp-78 each coordinate Mg(2+). Cys-92 and Cys-99 together coordinate Zn(2+).

It belongs to the PRA-CH family. Homodimer. Mg(2+) serves as cofactor. The cofactor is Zn(2+).

It is found in the cytoplasm. It catalyses the reaction 1-(5-phospho-beta-D-ribosyl)-5'-AMP + H2O = 1-(5-phospho-beta-D-ribosyl)-5-[(5-phospho-beta-D-ribosylamino)methylideneamino]imidazole-4-carboxamide. The protein operates within amino-acid biosynthesis; L-histidine biosynthesis; L-histidine from 5-phospho-alpha-D-ribose 1-diphosphate: step 3/9. In terms of biological role, catalyzes the hydrolysis of the adenine ring of phosphoribosyl-AMP. This chain is Phosphoribosyl-AMP cyclohydrolase, found in Pelobacter propionicus (strain DSM 2379 / NBRC 103807 / OttBd1).